The sequence spans 504 residues: Hexose transporter 1 (504 aa).

Topologically, residues 1–29 are cytoplasmic; it reads MTKSSKDICSENEGKKNGKSGFFSTSFKY. The chain crosses the membrane as a helical span at residues 30 to 50; it reads VLSACIASFIFGYQVSVLNTI. At 51–78 the chain is on the extracellular side; sequence KNFIVVEFEWCKGEKDRLNCSNNTIQSS. Cys61 and Cys70 are joined by a disulfide. Residues 79–99 form a helical membrane-spanning segment; sequence FLLASVFIGAVLGCGFSGYLV. Residues 100–104 lie on the Cytoplasmic side of the membrane; that stretch reads QFGRR. Residues 105-125 form a helical membrane-spanning segment; it reads LSLLIIYNFFFLVSILTSITH. Topologically, residues 126–129 are extracellular; the sequence is HFHT. Residues 130–150 form a helical membrane-spanning segment; that stretch reads ILFARLLSGFGIGLVTVSVPM. Residues 151–165 are Cytoplasmic-facing; that stretch reads YISEMTHKDKKGAYG. The chain crosses the membrane as a helical span at residues 166-186; it reads VMHQLFITFGIFVAVMLGLAM. Alpha-D-glucose is bound at residue Gln169. Residue Gln169 participates in beta-D-glucose binding. At 187–207 the chain is on the extracellular side; the sequence is GEGPKADSTEPLTSFAKLWWR. A helical transmembrane segment spans residues 208-228; the sequence is LMFLFPSVISLIGILALVVFF. Over 229-293 the chain is Cytoplasmic; the sequence is KEETPYFLFE…SALKIPSYRY (65 aa). The helical transmembrane segment at 294 to 314 threads the bilayer; the sequence is VIILGCLLSGLQQFTGINVLV. Positions 305, 306, and 311 each coordinate alpha-D-glucose. Residue Gln305 participates in beta-D-glucose binding. Asn311 contacts beta-D-glucose. The Extracellular portion of the chain corresponds to 315–331; the sequence is SNSNELYKEFLDSHLIT. The helical transmembrane segment at 332–352 threads the bilayer; that stretch reads ILSVVMTAVNFLMTFPAIYIV. Beta-D-glucose is bound at residue Asn341. Residues 353–358 are Cytoplasmic-facing; it reads EKLGRK. The chain crosses the membrane as a helical span at residues 359-379; the sequence is TLLLWGCVGVLVAYLPTAIAN. Residues 380 to 392 are Extracellular-facing; that stretch reads EINRNSNFVKILS. The helical transmembrane segment at 393–413 threads the bilayer; that stretch reads IVATFVMIISFAVSYGPVLWI. Trp412 contributes to the alpha-D-glucose binding site. Residues 414 to 429 are Cytoplasmic-facing; the sequence is YLHEMFPSEIKDSAAS. A helical membrane pass occupies residues 430–450; that stretch reads LASLVNWVCAIIVVFPSDIII. Topologically, residues 451–455 are extracellular; that stretch reads KKSPS. A helical membrane pass occupies residues 456 to 476; sequence ILFIVFSVMSILTFFFIFFFI. Residues 477–504 are Cytoplasmic-facing; it reads KETKGGEIGTSPYITMEERQKHMTKSVV.

It belongs to the major facilitator superfamily. Sugar transporter (TC 2.A.1.1) family. In terms of assembly, homodimer.

The protein resides in the cell membrane. It carries out the reaction D-glucose(out) = D-glucose(in). The catalysed reaction is D-fructose(out) = D-fructose(in). It catalyses the reaction D-galactose(in) = D-galactose(out). The enzyme catalyses D-mannose(out) = D-mannose(in). It carries out the reaction D-glucosamine(out) = D-glucosamine(in). The catalysed reaction is D-xylose(out) = D-xylose(in). Its activity is regulated as follows. Inhibited by cytochalasin B. Inhibited by compound 3361 (3-O-((undec-10-en)-1-yl)-D-glucose). Inhibited by compound HTI-1. Functionally, sodium-independent facilitative hexose transporter. Can transport D-glucose and D-fructose. Can transport D-mannose, D-galactose, D-xylose and D-glucosamine. This Plasmodium falciparum (isolate 3D7) protein is Hexose transporter 1.